The primary structure comprises 672 residues: DNA ligase (672 aa).

NAD(+) is bound by residues 32-36 (DEKYD), 82-83 (SL), and Glu113. Lys115 (N6-AMP-lysine intermediate) is an active-site residue. Residues Arg136, Glu173, Lys290, and Lys314 each coordinate NAD(+). Cys408, Cys411, Cys427, and Cys433 together coordinate Zn(2+). Residues 592-672 (DNNNTLFRKK…EFLNIINVYL (81 aa)) form the BRCT domain.

This sequence belongs to the NAD-dependent DNA ligase family. LigA subfamily. Mg(2+) is required as a cofactor. Requires Mn(2+) as cofactor.

The catalysed reaction is NAD(+) + (deoxyribonucleotide)n-3'-hydroxyl + 5'-phospho-(deoxyribonucleotide)m = (deoxyribonucleotide)n+m + AMP + beta-nicotinamide D-nucleotide.. In terms of biological role, DNA ligase that catalyzes the formation of phosphodiester linkages between 5'-phosphoryl and 3'-hydroxyl groups in double-stranded DNA using NAD as a coenzyme and as the energy source for the reaction. It is essential for DNA replication and repair of damaged DNA. The protein is DNA ligase of Buchnera aphidicola subsp. Baizongia pistaciae (strain Bp).